Consider the following 433-residue polypeptide: Probable M18 family aminopeptidase 2 (433 aa).

His79, His153, and His404 together coordinate Zn(2+).

The protein belongs to the peptidase M18 family. The cofactor is Zn(2+).

In Mycobacterium tuberculosis (strain ATCC 25177 / H37Ra), this protein is Probable M18 family aminopeptidase 2.